Reading from the N-terminus, the 85-residue chain is Mitochondrial protein pet191 homolog (85 aa).

One can recognise a CHCH domain in the interval 18 to 61 (HSDCMFVKKKSARECLKNKDELPEECKNLIEAYGECKRQMLDMT). The Cx10C motif signature appears at 21-32 (CMFVKKKSAREC). Intrachain disulfides connect Cys-21/Cys-53 and Cys-32/Cys-43. The short motif at 43-53 (CKNLIEAYGEC) is the Cx9C motif element. The disordered stretch occupies residues 65–85 (RIAPEKNTDQDTEKPSNVDEQ).

It belongs to the PET191 family.

It is found in the mitochondrion. Functionally, involved in the assembly of cytochrome c oxidase. The chain is Mitochondrial protein pet191 homolog from Schizosaccharomyces pombe (strain 972 / ATCC 24843) (Fission yeast).